An 831-amino-acid polypeptide reads, in one-letter code: Valine--tRNA ligase (831 aa).

The 'HIGH' region signature appears at 77–87 (PFTSGELHMGH). The short motif at 564 to 568 (RMSKS) is the 'KMSKS' region element. Lysine 567 is a binding site for ATP.

Belongs to the class-I aminoacyl-tRNA synthetase family. ValS type 2 subfamily.

It localises to the cytoplasm. The enzyme catalyses tRNA(Val) + L-valine + ATP = L-valyl-tRNA(Val) + AMP + diphosphate. In terms of biological role, catalyzes the attachment of valine to tRNA(Val). As ValRS can inadvertently accommodate and process structurally similar amino acids such as threonine, to avoid such errors, it has a 'posttransfer' editing activity that hydrolyzes mischarged Thr-tRNA(Val) in a tRNA-dependent manner. This Sulfolobus acidocaldarius (strain ATCC 33909 / DSM 639 / JCM 8929 / NBRC 15157 / NCIMB 11770) protein is Valine--tRNA ligase.